A 464-amino-acid polypeptide reads, in one-letter code: MDSSNLSSSMPQEGQLKLTEEAIITIKQVDESSAKRSVSNESRKSKDVTRKEQIASDQQGDDQCPQSDTAKDKKTEFKQDEVPNSNGKSIPTFHPCNNIGINDFNHQHYSRVCRNGIDINLIVVGESSLGKTTFVNSFLQSNDTNFRPKKTMDFVEHKATLSDGDQKFNLTIVDTPGFGDKSDNSNCWRPIATNLLHRLNAYFQNEVKMDRETSEIDSRIHGCLFFINPNGHRLQPLEIYIMKKIDQFVNIIPVIGKADTMTSDELNHFKKRVIADMVREKIRYFREPHNEKKAKIPIPFAIVGAGAPIEHDGKCIRGRAYPWGLVDIDDPKQSDFCQLRNFLLYTHIEGLKHKTHKLIYDTFRTEKLVALNATPGSQFISAEEMNQKYISEQTQLVEEALTKVMKEKYREKENNLELLETNLKTHHKDYKHALKKRITALEEEKNRLIKEIGPEKVKKAGILA.

The tract at residues 28-91 (QVDESSAKRS…VPNSNGKSIP (64 aa)) is disordered. Composition is skewed to basic and acidic residues over residues 41–54 (ESRK…KEQI) and 69–81 (TAKD…KQDE). The 256-residue stretch at 115–370 (NGIDINLIVV…DTFRTEKLVA (256 aa)) folds into the Septin-type G domain. Positions 125–132 (GESSLGKT) are G1 motif. Residues 125-132 (GESSLGKT), T151, G177, 257-265 (KADTMTSDE), G304, and R319 contribute to the GTP site. The segment at 174–177 (DTPG) is G3 motif. The segment at 256 to 259 (GKAD) is G4 motif. The stretch at 396–453 (LVEEALTKVMKEKYREKENNLELLETNLKTHHKDYKHALKKRITALEEEKNRLIKEIG) forms a coiled coil.

The protein belongs to the TRAFAC class TrmE-Era-EngA-EngB-Septin-like GTPase superfamily. Septin GTPase family. As to quaternary structure, component of the sporulation-specific septin complex composed of at least spn2, spn5, spn6 and spn7.

The protein localises to the nucleus. The protein resides in the forespore membrane. Its function is as follows. Septin-like protein involved in the correct orientation of forespore membrane extension during sporulation. The protein is Septin homolog spn5 (spn5) of Schizosaccharomyces pombe (strain 972 / ATCC 24843) (Fission yeast).